A 213-amino-acid polypeptide reads, in one-letter code: 5-methylthioribulose-1-phosphate/5-deoxyribulose-1-phosphate aldolase (213 aa).

The Proton donor/acceptor role is filled by Glu-73. Co(2+) contacts are provided by Glu-73, His-92, His-94, and His-155.

It belongs to the aldolase class II family. Co(2+) serves as cofactor.

The enzyme catalyses 5-(methylsulfanyl)-D-ribulose 1-phosphate = 2-(methylsulfanyl)acetaldehyde + dihydroxyacetone phosphate. It carries out the reaction 5-deoxy-D-ribulose 1-phosphate = dihydroxyacetone phosphate + acetaldehyde. It functions in the pathway amino-acid biosynthesis; L-methionine biosynthesis via salvage pathway. In terms of biological role, uses 5-methylthioribulose-1-phosphate to yield 2-(methylthio)acetaldehyde and dihydroxyacetone phosphate. Can also use 5-deoxyribulose 1-phosphate to yield acetaldehyde and dihydroxyacetone phosphate. Part of a bifunctional DHAP-shunt salvage pathway for SAM by-products. This chain is 5-methylthioribulose-1-phosphate/5-deoxyribulose-1-phosphate aldolase, found in Escherichia coli O45:K1 (strain S88 / ExPEC).